We begin with the raw amino-acid sequence, 92 residues long: MRLLILILLSVLVLFQYNFWFGSNGFLDYRQNAEKIKENQAENEKLSQRNQRINAEIQGLTKGFEAIEERARMQHGLVKENEVFYHIVKESK.

Residues 1 to 3 (MRL) lie on the Cytoplasmic side of the membrane. Residues 4 to 21 (LILILLSVLVLFQYNFWF) form a helical membrane-spanning segment. Residues 22 to 92 (GSNGFLDYRQ…VFYHIVKESK (71 aa)) lie on the Periplasmic side of the membrane. A coiled-coil region spans residues 28–63 (DYRQNAEKIKENQAENEKLSQRNQRINAEIQGLTKG).

The protein belongs to the FtsB family. In terms of assembly, part of a complex composed of FtsB, FtsL and FtsQ.

The protein resides in the cell inner membrane. In terms of biological role, essential cell division protein. May link together the upstream cell division proteins, which are predominantly cytoplasmic, with the downstream cell division proteins, which are predominantly periplasmic. The protein is Cell division protein FtsB of Haemophilus influenzae (strain 86-028NP).